The primary structure comprises 299 residues: Circadian clock oscillator protein KaiA (299 aa).

Residues 9 to 148 (SRPQIFICTL…LQLSKACRLP (140 aa)) are psR domain, binds oxidized quinones. The KaiA N-terminal domain occupies 9 to 179 (SRPQIFICTL…RLSQKLKERL (171 aa)). A flexible linker region spans residues 180–188 (GYLGVYYKR). A KaiA C-terminal domain is found at 189 to 297 (NPQQFFHKLT…CEMYRRSIPK (109 aa)).

Homodimer. The KaiABC complex composition changes during the circadian cycle to control KaiC phosphorylation. Complexes KaiC(6), KaiA(2-4):KaiC(6), KaiB(6):KaiC(6) and KaiC(6):KaiB(6):KaiA(12) are among the most important forms, many form cooperatively. KaiA and CikA bind to the same region of the KaiB(fs) form and therefore compete.

Key component of the KaiABC oscillator complex, which constitutes the main circadian regulator in cyanobacteria. Complex composition changes during the circadian cycle to control KaiC phosphorylation. KaiA stimulates KaiC autophosphorylation, while KaiB sequesters KaiA, leading to KaiC autodephosphorylation. KaiA binding to the KaiC CII domain during the subjective day yields KaiA(2-4):KaiC(6) complexes which stimulate KaiC autophosphorylation. Phospho-Ser-431 KaiC accumulation triggers binding of KaiB during the subjective night to form the KaiB(6):KaiC(6) complex, leading to changes in the output regulators CikA and SasA. KaiB(6):KaiC(6) formation exposes a site for KaiA binding on KaiB that sequesters KaiA from KaiC's CII domain, making the KaiC(6):KaiB(6):KaiA(12) complex resulting in KaiC autodephosphorylation. Complete dephosphorylation of KaiC leads to dissociation of KaiA(2):KaiB(1), completing 1 cycle of the Kai oscillator. Its function is as follows. Binds oxidized quinones via the N-terminal PsR domain, allowing it to sense redox changes and possibly mediate clock input. This is Circadian clock oscillator protein KaiA from Acaryochloris marina (strain MBIC 11017).